A 686-amino-acid chain; its full sequence is Elongation factor G 2 (686 aa).

Residues 7 to 280 enclose the tr-type G domain; that stretch reads TTVRNLGILA…AVVAYLPSPL (274 aa). GTP-binding positions include 16-23, 80-84, and 134-137; these read AHVDAGKT, DTPGH, and NKMD.

It belongs to the TRAFAC class translation factor GTPase superfamily. Classic translation factor GTPase family. EF-G/EF-2 subfamily.

The protein resides in the cytoplasm. In terms of biological role, catalyzes the GTP-dependent ribosomal translocation step during translation elongation. During this step, the ribosome changes from the pre-translocational (PRE) to the post-translocational (POST) state as the newly formed A-site-bound peptidyl-tRNA and P-site-bound deacylated tRNA move to the P and E sites, respectively. Catalyzes the coordinated movement of the two tRNA molecules, the mRNA and conformational changes in the ribosome. This is Elongation factor G 2 (fusB) from Streptomyces coelicolor (strain ATCC BAA-471 / A3(2) / M145).